The sequence spans 217 residues: Probable GTP-binding protein EngB (217 aa).

One can recognise an EngB-type G domain in the interval 29-213; the sequence is GPLEVAFAGR…RQAIAETVGI (185 aa). GTP-binding positions include 37 to 44, 64 to 68, 91 to 94, 158 to 161, and 192 to 194; these read GRSNVGKS, GRTQE, DMPG, TKTD, and TSS. The Mg(2+) site is built by serine 44 and threonine 66.

Belongs to the TRAFAC class TrmE-Era-EngA-EngB-Septin-like GTPase superfamily. EngB GTPase family. Requires Mg(2+) as cofactor.

In terms of biological role, necessary for normal cell division and for the maintenance of normal septation. The polypeptide is Probable GTP-binding protein EngB (Rhizobium johnstonii (strain DSM 114642 / LMG 32736 / 3841) (Rhizobium leguminosarum bv. viciae)).